Consider the following 183-residue polypeptide: Translocon-associated protein subunit beta (183 aa).

The signal sequence occupies residues 1 to 17 (MRLLSFVVLALFAVTQA). At 18 to 149 (EEGARLLASK…DRRFSPHFLD (132 aa)) the chain is on the lumenal side. N-linked (GlcNAc...) asparagine glycans are attached at residues Asn-88 and Asn-104. Residues 150 to 169 (WAAFGVMTLPSIGIPLLLWY) form a helical membrane-spanning segment. Residues 170–183 (SSKRKYDTPKTKKN) are Cytoplasmic-facing.

It belongs to the TRAP-beta family. In terms of assembly, heterotetramer of TRAP-alpha, TRAP-beta, TRAP-delta and TRAP-gamma. Interacts with STING1.

The protein localises to the endoplasmic reticulum membrane. In terms of biological role, TRAP proteins are part of a complex whose function is to bind calcium to the ER membrane and thereby regulate the retention of ER resident proteins. This Homo sapiens (Human) protein is Translocon-associated protein subunit beta (SSR2).